The chain runs to 403 residues: CinA-like protein (403 aa).

This sequence belongs to the CinA family.

The protein is CinA-like protein of Petrotoga mobilis (strain DSM 10674 / SJ95).